Reading from the N-terminus, the 97-residue chain is MEDHTLVAIVVFFGNGEPFHVSLSVEMVFVLLLSSTRIHEVVVLICYKLQHATWSWGNMSKNFSLKPDISLSFLLDIISINDICIYGCIALTVVFIL.

Helical transmembrane passes span 5 to 25 (TLVAIVVFFGNGEPFHVSLSV), 27 to 47 (MVFVLLLSSTRIHEVVVLICY), and 77 to 97 (IISINDICIYGCIALTVVFIL).

It localises to the membrane. This is an uncharacterized protein from Saccharomyces cerevisiae (strain ATCC 204508 / S288c) (Baker's yeast).